Consider the following 203-residue polypeptide: Urease accessory protein UreG (203 aa).

Residue 13 to 20 coordinates GTP; the sequence is GPVGSGKT.

The protein belongs to the SIMIBI class G3E GTPase family. UreG subfamily. As to quaternary structure, homodimer. UreD, UreF and UreG form a complex that acts as a GTP-hydrolysis-dependent molecular chaperone, activating the urease apoprotein by helping to assemble the nickel containing metallocenter of UreC. The UreE protein probably delivers the nickel.

It localises to the cytoplasm. In terms of biological role, facilitates the functional incorporation of the urease nickel metallocenter. This process requires GTP hydrolysis, probably effectuated by UreG. In Methylobacillus flagellatus (strain ATCC 51484 / DSM 6875 / VKM B-1610 / KT), this protein is Urease accessory protein UreG.